The sequence spans 250 residues: Heme oxygenase 2 (250 aa).

His16 is a heme b binding site. Residues 228 to 250 (QDRPGSTEARSTAGHPITLMVGE) are disordered.

It belongs to the heme oxygenase family. As to quaternary structure, homodimer.

It carries out the reaction heme b + 3 reduced [NADPH--hemoprotein reductase] + 3 O2 = biliverdin IXalpha + CO + Fe(2+) + 3 oxidized [NADPH--hemoprotein reductase] + 3 H2O + H(+). Catalyzes the opening of the heme ring with the release of iron. Key enzyme in the synthesis of the chromophoric part of the photosynthetic antennae. This is Heme oxygenase 2 (pbsA2) from Synechocystis sp. (strain ATCC 27184 / PCC 6803 / Kazusa).